Reading from the N-terminus, the 268-residue chain is HLA class II histocompatibility antigen, DQ beta 2 chain (268 aa).

The N-terminal stretch at M1–A32 is a signal peptide. The tract at residues R33 to V126 is beta-1. Over R33–K229 the chain is Extracellular. Disulfide bonds link C47/C110 and C148/C204. N-linked (GlcNAc...) asparagine glycosylation occurs at N51. Positions E127 to K229 are beta-2. Residues P128 to T216 enclose the Ig-like C1-type domain. A helical membrane pass occupies residues M230–I250. Over R251–H268 the chain is Cytoplasmic.

It belongs to the MHC class II family. As to quaternary structure, heterodimer of an alpha and a beta subunit; also referred as MHC class II molecule. Dimer formation with HLA-DQA2, but not with HLA-DQA1, is required for efficient exit from the endoplasmic reticulum (ER). In the ER, forms a heterononamer; 3 MHC class II molecules bind to a CD74 homotrimer (also known as invariant chain or HLA class II histocompatibility antigen gamma chain). In the endosomal/lysosomal system; CD74 undergoes sequential degradation by various proteases; leaving a small fragment termed CLIP on each MHC class II molecule. MHC class II molecule interacts with HLA_DM, and HLA_DO in B-cells, in order to release CLIP and facilitate the binding of antigenic peptides. Association with HLA-DMA also occurs in skin Langerhans cells, in post-Golgi compartments. Restricted to skin Langerhans cells (at protein level).

The protein resides in the cell membrane. It is found in the endoplasmic reticulum membrane. It localises to the golgi apparatus. Its subcellular location is the trans-Golgi network membrane. The protein localises to the endosome membrane. The protein resides in the lysosome membrane. Its function is as follows. Binds peptides derived from antigens that access the endocytic route of antigen presenting cells (APC) and presents them on the cell surface for recognition by the CD4 T-cells. The peptide binding cleft accommodates peptides of 10-30 residues. The peptides presented by MHC class II molecules are generated mostly by degradation of proteins that access the endocytic route, where they are processed by lysosomal proteases and other hydrolases. Exogenous antigens that have been endocytosed by the APC are thus readily available for presentation via MHC II molecules, and for this reason this antigen presentation pathway is usually referred to as exogenous. As membrane proteins on their way to degradation in lysosomes as part of their normal turn-over are also contained in the endosomal/lysosomal compartments, exogenous antigens must compete with those derived from endogenous components. Autophagy is also a source of endogenous peptides, autophagosomes constitutively fuse with MHC class II loading compartments. In addition to APCs, other cells of the gastrointestinal tract, such as epithelial cells, express MHC class II molecules and CD74 and act as APCs, which is an unusual trait of the GI tract. To produce a MHC class II molecule that presents an antigen, three MHC class II molecules (heterodimers of an alpha and a beta chain) associate with a CD74 trimer in the ER to form a heterononamer. Soon after the entry of this complex into the endosomal/lysosomal system where antigen processing occurs, CD74 undergoes a sequential degradation by various proteases, including CTSS and CTSL, leaving a small fragment termed CLIP (class-II-associated invariant chain peptide). The removal of CLIP is facilitated by HLA-DM via direct binding to the alpha-beta-CLIP complex so that CLIP is released. HLA-DM stabilizes MHC class II molecules until primary high affinity antigenic peptides are bound. The MHC II molecule bound to a peptide is then transported to the cell membrane surface. In B-cells, the interaction between HLA-DM and MHC class II molecules is regulated by HLA-DO. Primary dendritic cells (DCs) also to express HLA-DO. Lysosomal microenvironment has been implicated in the regulation of antigen loading into MHC II molecules, increased acidification produces increased proteolysis and efficient peptide loading. In Homo sapiens (Human), this protein is HLA class II histocompatibility antigen, DQ beta 2 chain (HLA-DQB2).